The following is a 385-amino-acid chain: Alanine racemase (385 aa).

Catalysis depends on lysine 40, which acts as the Proton acceptor; specific for D-alanine. Lysine 40 bears the N6-(pyridoxal phosphate)lysine mark. Arginine 139 provides a ligand contact to substrate. Tyrosine 268 serves as the catalytic Proton acceptor; specific for L-alanine. Methionine 315 lines the substrate pocket.

The protein belongs to the alanine racemase family. The cofactor is pyridoxal 5'-phosphate.

It carries out the reaction L-alanine = D-alanine. It functions in the pathway amino-acid biosynthesis; D-alanine biosynthesis; D-alanine from L-alanine: step 1/1. Its function is as follows. Catalyzes the interconversion of L-alanine and D-alanine. May also act on other amino acids. This is Alanine racemase (alr) from Anoxybacillus flavithermus (strain DSM 21510 / WK1).